The sequence spans 527 residues: Cytochrome P450 monooxygenase aba2 (527 aa).

A helical membrane pass occupies residues 26 to 46; that stretch reads TTVAVLVTVALIAQVLWKIFF. 3 N-linked (GlcNAc...) asparagine glycosylation sites follow: Asn-189, Asn-420, and Asn-448. Cys-460 contacts heme. N-linked (GlcNAc...) asparagine glycosylation is present at Asn-464.

This sequence belongs to the cytochrome P450 family. Heme serves as cofactor.

It localises to the membrane. The protein operates within hormone biosynthesis. Its function is as follows. Cytochrome P450 monooxygenase; part of the gene cluster that mediates the biosynthesis of abscisic acid (ABA), a phytohormone that acts antagonistically toward salicylic acid (SA), jasmonic acid (JA) and ethylene (ETH) signaling, to impede plant defense responses. The first step of the pathway catalyzes the reaction from farnesyl diphosphate to alpha-ionylideneethane performed by the alpha-ionylideneethane synthase aba3 via a three-step reaction mechanism involving 2 neutral intermediates, beta-farnesene and allofarnesene. The cytochrome P450 monooxygenase aba1 might then be involved in the conversion of alpha-ionylideneethane to alpha-ionylideneacetic acid. Alpha-ionylideneacetic acid is further converted to abscisic acid in 2 steps involving the cytochrome P450 monooxygenase aba2 and the short-chain dehydrogenase/reductase aba4, via the intermediates 1'-deoxy-ABA or 1',4'-trans-diol-ABA, depending on the order of action of these 2 enzymes. Aba2 is responsible for the hydroxylation of carbon atom C-1' and aba4 might be involved in the oxidation of the C-4' carbon atom. The polypeptide is Cytochrome P450 monooxygenase aba2 (aba2) (Botryotinia fuckeliana (strain B05.10) (Noble rot fungus)).